We begin with the raw amino-acid sequence, 895 residues long: Protein translocase subunit SecA (895 aa).

Residues Gln-86, 104-108 (GEGKT), and Asp-494 contribute to the ATP site. Composition is skewed to low complexity over residues 838–849 (AAATPPGFGAPP) and 870–882 (GDAA…TGNR). Residues 838 to 895 (AAATPPGFGAPPVRQQLQYSAPTAEGDVEVHAGDAAATDADTGNRAQRRANQRQQREV) are disordered.

Belongs to the SecA family. In terms of assembly, monomer and homodimer. Part of the essential Sec protein translocation apparatus which comprises SecA, SecYEG and auxiliary proteins SecDF. Other proteins may also be involved.

It localises to the cell membrane. Its subcellular location is the cytoplasm. The catalysed reaction is ATP + H2O + cellular proteinSide 1 = ADP + phosphate + cellular proteinSide 2.. Functionally, part of the Sec protein translocase complex. Interacts with the SecYEG preprotein conducting channel. Has a central role in coupling the hydrolysis of ATP to the transfer of proteins into and across the cell membrane, serving as an ATP-driven molecular motor driving the stepwise translocation of polypeptide chains across the membrane. This is Protein translocase subunit SecA from Kineococcus radiotolerans (strain ATCC BAA-149 / DSM 14245 / SRS30216).